The chain runs to 184 residues: UPF0149 protein PP_5201 (184 aa).

It belongs to the UPF0149 family.

The sequence is that of UPF0149 protein PP_5201 from Pseudomonas putida (strain ATCC 47054 / DSM 6125 / CFBP 8728 / NCIMB 11950 / KT2440).